The sequence spans 87 residues: Pyocin-S1 immunity protein (87 aa).

Belongs to the colicins ColE2/ColE8/ColE9 and pyocins S1/S2 family.

In Pseudomonas aeruginosa, this protein is Pyocin-S1 immunity protein (imm1).